A 339-amino-acid polypeptide reads, in one-letter code: UDP-N-acetylglucosamine--N-acetylmuramyl-(pentapeptide) pyrophosphoryl-undecaprenol N-acetylglucosamine transferase (339 aa).

Residues 10-12, asparagine 124, arginine 168, serine 188, isoleucine 235, and glutamine 280 each bind UDP-N-acetyl-alpha-D-glucosamine; that span reads TGG.

The protein belongs to the glycosyltransferase 28 family. MurG subfamily.

Its subcellular location is the cell inner membrane. The catalysed reaction is di-trans,octa-cis-undecaprenyl diphospho-N-acetyl-alpha-D-muramoyl-L-alanyl-D-glutamyl-meso-2,6-diaminopimeloyl-D-alanyl-D-alanine + UDP-N-acetyl-alpha-D-glucosamine = di-trans,octa-cis-undecaprenyl diphospho-[N-acetyl-alpha-D-glucosaminyl-(1-&gt;4)]-N-acetyl-alpha-D-muramoyl-L-alanyl-D-glutamyl-meso-2,6-diaminopimeloyl-D-alanyl-D-alanine + UDP + H(+). The protein operates within cell wall biogenesis; peptidoglycan biosynthesis. Functionally, cell wall formation. Catalyzes the transfer of a GlcNAc subunit on undecaprenyl-pyrophosphoryl-MurNAc-pentapeptide (lipid intermediate I) to form undecaprenyl-pyrophosphoryl-MurNAc-(pentapeptide)GlcNAc (lipid intermediate II). The protein is UDP-N-acetylglucosamine--N-acetylmuramyl-(pentapeptide) pyrophosphoryl-undecaprenol N-acetylglucosamine transferase of Pseudothermotoga lettingae (strain ATCC BAA-301 / DSM 14385 / NBRC 107922 / TMO) (Thermotoga lettingae).